The sequence spans 161 residues: MDFRIGQGYDVHQLVEGRPLIIGGVTIPYERGLLGHSDADVLLHAITDALFGAAALGDIGRHFSDTDAAFKGADSRVLLRECVARINAAGFTIQNVDSTVIAQAPKLAPHIDGMRANIAADLGLPLDRVNVKAKTNEKLGYLGRGEGIEAQAAALLVKQGG.

2 residues coordinate a divalent metal cation: Asp-10 and His-12. Residues 10–12 and 36–37 contribute to the 4-CDP-2-C-methyl-D-erythritol 2-phosphate site; these read DVH and HS. An a divalent metal cation-binding site is contributed by His-44. 4-CDP-2-C-methyl-D-erythritol 2-phosphate-binding positions include 58-60, 63-67, and Arg-144; these read DIG and FSDTD.

The protein belongs to the IspF family. Homotrimer. A divalent metal cation serves as cofactor.

The catalysed reaction is 4-CDP-2-C-methyl-D-erythritol 2-phosphate = 2-C-methyl-D-erythritol 2,4-cyclic diphosphate + CMP. Its pathway is isoprenoid biosynthesis; isopentenyl diphosphate biosynthesis via DXP pathway; isopentenyl diphosphate from 1-deoxy-D-xylulose 5-phosphate: step 4/6. Its function is as follows. Involved in the biosynthesis of isopentenyl diphosphate (IPP) and dimethylallyl diphosphate (DMAPP), two major building blocks of isoprenoid compounds. Catalyzes the conversion of 4-diphosphocytidyl-2-C-methyl-D-erythritol 2-phosphate (CDP-ME2P) to 2-C-methyl-D-erythritol 2,4-cyclodiphosphate (ME-CPP) with a corresponding release of cytidine 5-monophosphate (CMP). The sequence is that of 2-C-methyl-D-erythritol 2,4-cyclodiphosphate synthase from Burkholderia lata (strain ATCC 17760 / DSM 23089 / LMG 22485 / NCIMB 9086 / R18194 / 383).